The sequence spans 272 residues: Acetylglutamate kinase (272 aa).

Residues 41 to 42 (GG), Arg63, and Asn166 contribute to the substrate site.

This sequence belongs to the acetylglutamate kinase family. ArgB subfamily.

Its subcellular location is the cytoplasm. The catalysed reaction is N-acetyl-L-glutamate + ATP = N-acetyl-L-glutamyl 5-phosphate + ADP. Its pathway is amino-acid biosynthesis; L-arginine biosynthesis; N(2)-acetyl-L-ornithine from L-glutamate: step 2/4. Its function is as follows. Catalyzes the ATP-dependent phosphorylation of N-acetyl-L-glutamate. This chain is Acetylglutamate kinase, found in Anaeromyxobacter dehalogenans (strain 2CP-1 / ATCC BAA-258).